Here is a 763-residue protein sequence, read N- to C-terminus: Putative pentatricopeptide repeat-containing protein At1g74580 (763 aa).

PPR repeat units lie at residues 39–69 (TLSTYRSVIEKLGYYGKFEAMEEVLVDMREN), 75–109 (LEGVYVGAMKNYGRKGKVQEAVNVFERMDFYDCEP), 110–144 (TVFSYNAIMSVLVDSGYFDQAHKVYMRMRDRGITP), 145–179 (DVYSFTIRMKSFCKTSRPHAALRLLNNMSSQGCEM), 180–214 (NVVAYCTVVGGFYEENFKAEGYELFGKMLASGVSL), 215–249 (CLSTFNKLLRVLCKKGDVKECEKLLDKVIKRGVLP), 250–284 (NLFTYNLFIQGLCQRGELDGAVRMVGCLIEQGPKP), 285–319 (DVITYNNLIYGLCKNSKFQEAEVYLGKMVNEGLEP), 320–354 (DSYTYNTLIAGYCKGGMVQLAERIVGDAVFNGFVP), 355–389 (DQFTYRSLIDGLCHEGETNRALALFNEALGKGIKP), 390–424 (NVILYNTLIKGLSNQGMILEAAQLANEMSEKGLIP), 425–459 (EVQTFNILVNGLCKMGCVSDADGLVKVMISKGYFP), 460–494 (DIFTFNILIHGYSTQLKMENALEILDVMLDNGVDP), 495–529 (DVYTYNSLLNGLCKTSKFEDVMETYKTMVEKGCAP), 530–564 (NLFTFNILLESLCRYRKLDEALGLLEEMKNKSVNP), 565–595 (DAVTFGTLIDGFCKNGDLDGAYTLFRKMEEA), 601–635 (STPTYNIIIHAFTEKLNVTMAEKLFQEMVDRCLGP), 636–670 (DGYTYRLMVDGFCKTGNVNLGYKFLLEMMENGFIP), and 671–705 (SLTTLGRVINCLCVEDRVYEAAGIIHRMVQKGLVP).

This sequence belongs to the PPR family. P subfamily.

In Arabidopsis thaliana (Mouse-ear cress), this protein is Putative pentatricopeptide repeat-containing protein At1g74580.